Here is a 51-residue protein sequence, read N- to C-terminus: Ribosome biogenesis protein Nop10 (51 aa).

The protein belongs to the NOP10 family.

In terms of biological role, involved in ribosome biogenesis; more specifically in 18S rRNA pseudouridylation and in cleavage of pre-rRNA. The polypeptide is Ribosome biogenesis protein Nop10 (Methanococcus aeolicus (strain ATCC BAA-1280 / DSM 17508 / OCM 812 / Nankai-3)).